Consider the following 304-residue polypeptide: Nod factor export ATP-binding protein I (304 aa).

The ABC transporter domain occupies 6-236 (IEFDKVKKSY…EIGCDVIEIF (231 aa)). 38 to 45 (GPNGAGKT) contacts ATP.

It belongs to the ABC transporter superfamily. Lipooligosaccharide exporter (TC 3.A.1.102) family. As to quaternary structure, the complex is composed of two ATP-binding proteins (NodI) and two transmembrane proteins (NodJ).

It is found in the cell inner membrane. Functionally, part of the ABC transporter complex NodIJ involved in the export of the nodulation factors (Nod factors), the bacterial signal molecules that induce symbiosis and subsequent nodulation induction. Nod factors are LCO (lipo-chitin oligosaccharide), a modified beta-1,4-linked N-acetylglucosamine oligosaccharide. This subunit is responsible for energy coupling to the transport system. The protein is Nod factor export ATP-binding protein I of Paraburkholderia xenovorans (strain LB400).